Reading from the N-terminus, the 460-residue chain is Inner membrane symporter YicJ (460 aa).

At 1 to 11 (MKSEVLSVKEK) the chain is on the periplasmic side. Transmembrane regions (helical) follow at residues 12–32 (IGYGMGDAASHIIFDNVMLYM) and 33–53 (MFFYTDIFGIPAGFVGTMFLV). The Periplasmic segment spans residues 54 to 80 (ARALDAISDPCMGLLADRTRSRWGKFR). The chain crosses the membrane as a helical span at residues 81–101 (PWVLFGALPFGIVCVLAYSTP). Residues 102–116 (DLSMNGKMIYAAITY) are Cytoplasmic-facing. Residues 117 to 137 (TLLTLLYTVVNIPYCALGGVI) traverse the membrane as a helical segment. The Periplasmic portion of the chain corresponds to 138–152 (TNDPTQRISLQSWRF). A helical transmembrane segment spans residues 153–173 (VLATAGGMLSTVLMMPLVNLI). The Cytoplasmic segment spans residues 174 to 181 (GGDNKPLG). A helical transmembrane segment spans residues 182-202 (FQGGIAVLSVVAFMMLAFCFF). Residues 203–248 (TTKERVEAPPTTTSMREDLRDIWQNDQWRIVGLLTIFNILAVCVRG) are Periplasmic-facing. Residues 249–269 (GAMMYYVTWILGTPEVFVAFL) traverse the membrane as a helical segment. The Cytoplasmic segment spans residues 270-288 (TTYCVGNLIGSALAKPLTD). A helical membrane pass occupies residues 289–309 (WKCKVTIFWWTNALLAVISLA). A topological domain (periplasmic) is located at residue M310. Residues 311–331 (FFVPMQASITMFVFIFVIGVL) traverse the membrane as a helical segment. The Cytoplasmic portion of the chain corresponds to 332–366 (HQLVTPIQWVMMSDTVDYGEWCNGKRLTGISFAGT). Residues 367 to 387 (LFVLKLGLAFGGALIGWMLAY) traverse the membrane as a helical segment. Residues 388-403 (GGYDAAEKAQNSATIS) lie on the Periplasmic side of the membrane. The chain crosses the membrane as a helical span at residues 404–424 (IIIALFTIVPAICYLLSAIIA). The Cytoplasmic segment spans residues 425–460 (KRYYSLTTHNLKTVMEQLAQGKRRCQQQFTSQEVQN).

The protein belongs to the sodium:galactoside symporter (TC 2.A.2) family.

The protein localises to the cell inner membrane. This is Inner membrane symporter YicJ (yicJ) from Escherichia coli (strain K12).